A 375-amino-acid polypeptide reads, in one-letter code: Myb family transcription factor PHL5 (375 aa).

Polar residues predominate over residues 159-171 (TSSQHQPKQSHPR). Residues 159–178 (TSSQHQPKQSHPRFSSPPSF) form a disordered region. An HTH myb-type domain is found at 189-249 (CVNKTRIRWT…HLQKYRIAKY (61 aa)). Residues 220 to 245 (PKAILKRMDSDGLTIFHVKSHLQKYR) constitute a DNA-binding region (H-T-H motif). A coiled-coil region spans residues 279-299 (KEALQLQLDVQRHLHEQLEIQ). Residues 292 to 297 (LHEQLE) carry the LHEQLE motif.

Belongs to the MYB-CC family.

The protein localises to the nucleus. The polypeptide is Myb family transcription factor PHL5 (Arabidopsis thaliana (Mouse-ear cress)).